A 434-amino-acid polypeptide reads, in one-letter code: Beta-enolase (434 aa).

A2 is modified (N-acetylalanine). Position 72 is a phosphothreonine (T72). Residues S83 and S157 each carry the phosphoserine modification. 2 residues coordinate substrate: H158 and E167. The residue at position 176 (S176) is a Phosphoserine. T205 is modified (phosphothreonine). E210 (proton donor) is an active-site residue. The residue at position 229 (T229) is a Phosphothreonine. The residue at position 236 (Y236) is a Phosphotyrosine. D245 lines the Mg(2+) pocket. S263 carries the post-translational modification Phosphoserine. Positions 293 and 318 each coordinate substrate. Mg(2+) contacts are provided by E293 and D318. K343 functions as the Proton acceptor in the catalytic mechanism. Substrate-binding positions include 370-373 and K394; that span reads SHRS.

It belongs to the enolase family. In terms of assembly, mammalian enolase is composed of 3 isozyme subunits, alpha, beta and gamma, which can form homodimers or heterodimers which are cell-type and development-specific. Interacts with PNKD. Requires Mg(2+) as cofactor.

The protein resides in the cytoplasm. The catalysed reaction is (2R)-2-phosphoglycerate = phosphoenolpyruvate + H2O. It functions in the pathway carbohydrate degradation; glycolysis; pyruvate from D-glyceraldehyde 3-phosphate: step 4/5. In terms of biological role, glycolytic enzyme that catalyzes the conversion of 2-phosphoglycerate to phosphoenolpyruvate. Appears to have a function in striated muscle development and regeneration. The polypeptide is Beta-enolase (ENO3) (Sus scrofa (Pig)).